The chain runs to 507 residues: MAKRKVPAEFVVERDDYKCIRCLACVRVCSYGANYYDENANRVYTENYKCVGCHFCEAICPTEAITVRRNNFDIRPLAHWTPEHLIGIMKQADTGGVLLTSMGNDRPYFSYFDRIVLNASQVTNPSIDPLREPMEIRTYIGRKEAKLEIEEDGEGNVALKTEIAPQLKLEVPVMFTAMSYGSISLNALLSLARAARTIGTFFNTGEGGLPKELREFKDNMIVQVASGRFGVSADYLNAGSAVEIKIGQGAKPGIGGHLPGEKVTEPISETRMIPVGTDALSPAPHHDIYSIEDLRQLIYAIKEATRYEKPVGVKIAAVHNVAPIAAGMVRAGADYIVIDGIRGGTGAAPKVTRDHVGIPIEFAIAVVDQRLREEGIRHMASIVVAGGIRNSADVIKAIALGADAVYIGTAALVALGCHLCQTCYLGKCNWGIATQDPKLTKRLNPEIGARRAANLLRAWAHEIKEILGGMGINAIESLRGNREALRGVGLHEYELKLLGIKPAGEAW.

2 4Fe-4S ferredoxin-type domains span residues 10–39 (FVVE…YDEN) and 41–70 (NRVY…VRRN). [4Fe-4S] cluster is bound by residues Cys19, Cys22, Cys25, Cys29, Cys50, Cys53, Cys56, and Cys60.

The protein belongs to the glutamate synthase family. It depends on FMN as a cofactor.

The enzyme catalyses 2 L-glutamate + NADP(+) = L-glutamine + 2-oxoglutarate + NADPH + H(+). This is Archaeal-type glutamate synthase [NADPH] from Thermotoga neapolitana (strain ATCC 49049 / DSM 4359 / NBRC 107923 / NS-E).